A 252-amino-acid polypeptide reads, in one-letter code: Chitooligosaccharide deacetylase (252 aa).

Histidine 61 and histidine 125 together coordinate Mg(2+).

This sequence belongs to the YdjC deacetylase family. ChbG subfamily. Homodimer. The cofactor is Mg(2+).

It localises to the cytoplasm. The enzyme catalyses N,N'-diacetylchitobiose + H2O = N-acetyl-beta-D-glucosaminyl-(1-&gt;4)-D-glucosamine + acetate. It catalyses the reaction diacetylchitobiose-6'-phosphate + H2O = N'-monoacetylchitobiose-6'-phosphate + acetate. It functions in the pathway glycan degradation; chitin degradation. Its function is as follows. Involved in the degradation of chitin. ChbG is essential for growth on the acetylated chitooligosaccharides chitobiose and chitotriose but is dispensable for growth on cellobiose and chitosan dimer, the deacetylated form of chitobiose. Deacetylation of chitobiose-6-P and chitotriose-6-P is necessary for both the activation of the chb promoter by the regulatory protein ChbR and the hydrolysis of phosphorylated beta-glucosides by the phospho-beta-glucosidase ChbF. Catalyzes the removal of only one acetyl group from chitobiose-6-P to yield monoacetylchitobiose-6-P, the inducer of ChbR and the substrate of ChbF. This is Chitooligosaccharide deacetylase from Salmonella newport (strain SL254).